We begin with the raw amino-acid sequence, 378 residues long: Probable mannosyltransferase MNT3 (378 aa).

At 1–4 the chain is on the cytoplasmic side; sequence MLWH. The helical; Signal-anchor for type II membrane protein transmembrane segment at 5-25 threads the bilayer; it reads LVFILIAILLLTFSPKIESLF. Residues 26 to 378 lie on the Lumenal side of the membrane; the sequence is KSFTINKPTK…TNHFLNILHN (353 aa). N-linked (GlcNAc...) asparagine glycans are attached at residues N73 and N149.

Belongs to the glycosyltransferase 15 family.

It localises to the membrane. Functionally, transfers an alpha-D-mannosyl residue from GDP-mannose into lipid-linked oligosaccharide, forming an alpha-(1-&gt;2)-D-mannosyl-D-mannose linkage. This chain is Probable mannosyltransferase MNT3 (MNT3), found in Candida albicans (strain SC5314 / ATCC MYA-2876) (Yeast).